Here is a 362-residue protein sequence, read N- to C-terminus: Phosphoserine aminotransferase (362 aa).

The L-glutamate site is built by serine 9 and arginine 42. Pyridoxal 5'-phosphate-binding positions include 76 to 77 (GR), tryptophan 102, threonine 153, aspartate 174, and glutamine 197. Lysine 198 carries the post-translational modification N6-(pyridoxal phosphate)lysine. 239–240 (NT) contacts pyridoxal 5'-phosphate.

It belongs to the class-V pyridoxal-phosphate-dependent aminotransferase family. SerC subfamily. In terms of assembly, homodimer. Pyridoxal 5'-phosphate serves as cofactor.

The protein resides in the cytoplasm. The enzyme catalyses O-phospho-L-serine + 2-oxoglutarate = 3-phosphooxypyruvate + L-glutamate. It carries out the reaction 4-(phosphooxy)-L-threonine + 2-oxoglutarate = (R)-3-hydroxy-2-oxo-4-phosphooxybutanoate + L-glutamate. The protein operates within amino-acid biosynthesis; L-serine biosynthesis; L-serine from 3-phospho-D-glycerate: step 2/3. It functions in the pathway cofactor biosynthesis; pyridoxine 5'-phosphate biosynthesis; pyridoxine 5'-phosphate from D-erythrose 4-phosphate: step 3/5. In terms of biological role, catalyzes the reversible conversion of 3-phosphohydroxypyruvate to phosphoserine and of 3-hydroxy-2-oxo-4-phosphonooxybutanoate to phosphohydroxythreonine. Is involved in both pyridoxine and serine biosynthesis. This is Phosphoserine aminotransferase (serC) from Escherichia coli (strain K12).